The following is a 412-amino-acid chain: Proline-rich protein 30 (412 aa).

The segment covering 33–45 (HNLQPLSAHQSLR) has biased composition (polar residues). 3 disordered regions span residues 33–75 (HNLQ…QFGS), 123–174 (PLTP…SNRQ), and 318–412 (PKEV…KSSV). Composition is skewed to low complexity over residues 126-142 (PSFSPSQPQNSSLPHSP) and 334-350 (PSPAFQPPAAQARADPA). Over residues 353-372 (TPSQTRSFRSAGLQSPNSPR) the composition is skewed to polar residues.

The chain is Proline-rich protein 30 (PRR30) from Macaca fascicularis (Crab-eating macaque).